The sequence spans 432 residues: Putative transferase At1g60990, chloroplastic (432 aa).

The transit peptide at 1–57 (MNLLQSCKDMAMMMRIDSVSHITNTALLPCLYNGTVLRRRSLSLRKCGFRERKFQLR) directs the protein to the chloroplast.

Belongs to the GcvT family. In terms of tissue distribution, expressed in young leaves (at protein level).

The protein resides in the plastid. The protein localises to the chloroplast. Its function is as follows. Folate-dependent protein involved in Fe/S cluster biogenesis. Functionally complements an E.coli mutant defective in ygfZ. The chain is Putative transferase At1g60990, chloroplastic from Arabidopsis thaliana (Mouse-ear cress).